The chain runs to 179 residues: tRNA (cytidine(56)-2'-O)-methyltransferase (179 aa).

Residues leucine 82, 112 to 116, and 130 to 137 each bind S-adenosyl-L-methionine; these read GAEKV and VGNQPHSE.

It belongs to the aTrm56 family. Homodimer.

It is found in the cytoplasm. The catalysed reaction is cytidine(56) in tRNA + S-adenosyl-L-methionine = 2'-O-methylcytidine(56) in tRNA + S-adenosyl-L-homocysteine + H(+). Functionally, specifically catalyzes the AdoMet-dependent 2'-O-ribose methylation of cytidine at position 56 in tRNAs. This is tRNA (cytidine(56)-2'-O)-methyltransferase from Methanococcus maripaludis (strain C5 / ATCC BAA-1333).